The following is a 258-amino-acid chain: Aspartate/glutamate leucyltransferase (258 aa).

This sequence belongs to the R-transferase family. Bpt subfamily.

The protein localises to the cytoplasm. The enzyme catalyses N-terminal L-glutamyl-[protein] + L-leucyl-tRNA(Leu) = N-terminal L-leucyl-L-glutamyl-[protein] + tRNA(Leu) + H(+). The catalysed reaction is N-terminal L-aspartyl-[protein] + L-leucyl-tRNA(Leu) = N-terminal L-leucyl-L-aspartyl-[protein] + tRNA(Leu) + H(+). Functions in the N-end rule pathway of protein degradation where it conjugates Leu from its aminoacyl-tRNA to the N-termini of proteins containing an N-terminal aspartate or glutamate. This Rhodopseudomonas palustris (strain BisB18) protein is Aspartate/glutamate leucyltransferase.